The chain runs to 112 residues: MATPFIAGVAVAATALAGRYGIQAWQAFKARPPRPKIKKFYEGGFQPTMTKREAALILGVRESVAAEKVKEAHRKVMVANHPDAGGSHFLASKINEAKDVMLGKTKNSGSAF.

Ala-2 is modified (N-acetylalanine). A helical transmembrane segment spans residues 7-23 (AGVAVAATALAGRYGIQ). The region spanning 53-112 (EAALILGVRESVAAEKVKEAHRKVMVANHPDAGGSHFLASKINEAKDVMLGKTKNSGSAF) is the J domain.

It belongs to the TIM14 family. Probable component of the PAM complex at least composed of a mitochondrial HSP70 protein, TIMM44 and TIMM14. The complex interacts with the TIMM23 component of the TIM17:23 complex.

The protein resides in the mitochondrion. It localises to the mitochondrion inner membrane. In terms of biological role, component of the PAM complex, a complex required for the translocation of transit peptide-containing proteins from the inner membrane into the mitochondrial matrix in an ATP-dependent manner. The sequence is that of Mitochondrial import inner membrane translocase subunit TIM14-1 (TIM14-1) from Arabidopsis thaliana (Mouse-ear cress).